The primary structure comprises 376 residues: 23S rRNA (uracil(747)-C(5))-methyltransferase RlmC (376 aa).

The [4Fe-4S] cluster site is built by Cys-3, Cys-11, Cys-14, and Cys-87. Residues Gln-212, Phe-241, Glu-262, and Asn-307 each contribute to the S-adenosyl-L-methionine site. The Nucleophile role is filled by Cys-334.

It belongs to the class I-like SAM-binding methyltransferase superfamily. RNA M5U methyltransferase family. RlmC subfamily.

It catalyses the reaction uridine(747) in 23S rRNA + S-adenosyl-L-methionine = 5-methyluridine(747) in 23S rRNA + S-adenosyl-L-homocysteine + H(+). Catalyzes the formation of 5-methyl-uridine at position 747 (m5U747) in 23S rRNA. This chain is 23S rRNA (uracil(747)-C(5))-methyltransferase RlmC, found in Salmonella typhimurium (strain LT2 / SGSC1412 / ATCC 700720).